Here is an 810-residue protein sequence, read N- to C-terminus: LPS-assembly protein LptD (810 aa).

The N-terminal stretch at 1–29 is a signal peptide; sequence MTKRTLGYSYPIALTISLVPALTPAIVQA.

It belongs to the LptD family. As to quaternary structure, component of the lipopolysaccharide transport and assembly complex. Interacts with LptE and LptA.

It is found in the cell outer membrane. Together with LptE, is involved in the assembly of lipopolysaccharide (LPS) at the surface of the outer membrane. The protein is LPS-assembly protein LptD of Aeromonas hydrophila subsp. hydrophila (strain ATCC 7966 / DSM 30187 / BCRC 13018 / CCUG 14551 / JCM 1027 / KCTC 2358 / NCIMB 9240 / NCTC 8049).